Consider the following 321-residue polypeptide: Fe-S cluster assembly protein DRE2 (321 aa).

Positions 1-140 are N-terminal SAM-like domain; that stretch reads MNNTAHSMSE…RRPASSSVAE (140 aa). Residues 128 to 138 show a composition bias toward polar residues; it reads IESRRPASSSV. Positions 128–166 are disordered; sequence IESRRPASSSVAEKDSTASSGMGAVKLRRKPNENGGHQQ. Positions 140-177 are linker; it reads EKDSTASSGMGAVKLRRKPNENGGHQQKKALLWATQPE. Residues cysteine 202, cysteine 217, cysteine 220, and cysteine 222 each contribute to the [2Fe-2S] cluster site. The tract at residues 202-222 is fe-S binding site A; that stretch reads CTVDFSAPRTRRKRACKGCTC. The interval 239 to 263 is disordered; sequence QLDPSEVGGTGGKRTEVTTTVKGPN. [4Fe-4S] cluster is bound by residues cysteine 283, cysteine 286, cysteine 294, and cysteine 297. Short sequence motifs (cx2C motif) lie at residues 283–286 and 294–297; these read CGSC and CSSC. The interval 283–297 is fe-S binding site B; it reads CGSCFLGDAFRCSSC.

The protein belongs to the anamorsin family. As to quaternary structure, monomer. Interacts with TAH18. Interacts with MIA40. The cofactor is [2Fe-2S] cluster. [4Fe-4S] cluster is required as a cofactor.

It is found in the cytoplasm. The protein localises to the mitochondrion intermembrane space. Its function is as follows. Component of the cytosolic iron-sulfur (Fe-S) protein assembly (CIA) machinery required for the maturation of extramitochondrial Fe-S proteins. Part of an electron transfer chain functioning in an early step of cytosolic Fe-S biogenesis, facilitating the de novo assembly of a [4Fe-4S] cluster on the scaffold complex CFD1-NBP35. Electrons are transferred to DRE2 from NADPH via the FAD- and FMN-containing protein TAH18. TAH18-DRE2 are also required for the assembly of the diferric tyrosyl radical cofactor of ribonucleotide reductase (RNR), probably by providing electrons for reduction during radical cofactor maturation in the catalytic small subunit RNR2. The sequence is that of Fe-S cluster assembly protein DRE2 from Malassezia globosa (strain ATCC MYA-4612 / CBS 7966) (Dandruff-associated fungus).